Consider the following 193-residue polypeptide: MASTDKHGDTEYRTSSSTPAPAGVDYFKFDVILRFVLFAASLVAVVVIVTGNQTEVILVPQPVPWPAKFRYTPAFVYFVAALSVTGLYSIITTLASLFASNKPALKTKLLPYFILWDALILGIIASATGTAGGVAYLGLKGNSHVVGWNKICHVYDKFCRHVGASIAVALFGSIVTVLLIWLSAYSIHSRVPK.

Residues 1 to 30 lie on the Cytoplasmic side of the membrane; that stretch reads MASTDKHGDTEYRTSSSTPAPAGVDYFKFD. A helical transmembrane segment spans residues 31–51; sequence VILRFVLFAASLVAVVVIVTG. A glycan (N-linked (GlcNAc...) asparagine) is linked at Asn52. Residues 52 to 73 lie on the Extracellular side of the membrane; sequence NQTEVILVPQPVPWPAKFRYTP. Residues 74-94 form a helical membrane-spanning segment; the sequence is AFVYFVAALSVTGLYSIITTL. The Cytoplasmic portion of the chain corresponds to 95 to 108; the sequence is ASLFASNKPALKTK. A helical membrane pass occupies residues 109 to 129; it reads LLPYFILWDALILGIIASATG. Residues 130–161 are Extracellular-facing; it reads TAGGVAYLGLKGNSHVVGWNKICHVYDKFCRH. The chain crosses the membrane as a helical span at residues 162-182; it reads VGASIAVALFGSIVTVLLIWL. Residues 183-193 lie on the Cytoplasmic side of the membrane; the sequence is SAYSIHSRVPK.

The protein belongs to the Casparian strip membrane proteins (CASP) family. Homodimer and heterodimers.

It is found in the cell membrane. The polypeptide is CASP-like protein 1D1 (Glycine max (Soybean)).